Reading from the N-terminus, the 312-residue chain is Ribosomal RNA small subunit methyltransferase H (312 aa).

S-adenosyl-L-methionine contacts are provided by residues 37–39, Asp-57, Phe-83, and Asp-104; that span reads GGH.

This sequence belongs to the methyltransferase superfamily. RsmH family.

The protein resides in the cytoplasm. It carries out the reaction cytidine(1402) in 16S rRNA + S-adenosyl-L-methionine = N(4)-methylcytidine(1402) in 16S rRNA + S-adenosyl-L-homocysteine + H(+). Specifically methylates the N4 position of cytidine in position 1402 (C1402) of 16S rRNA. This chain is Ribosomal RNA small subunit methyltransferase H, found in Malacoplasma penetrans (strain HF-2) (Mycoplasma penetrans).